Consider the following 191-residue polypeptide: MKKSLLGLTFASLMFSAGSAVAADYKIDKEGQHAFVNFRIQHLGYSWLYGTFKDFDGTFTFDEKNPAADKVNVTINTTSVDTNHAERDKHLRSADFLNTTKYPQATFTSTSVKKDGDELDITGDLTLNGVTKPVTLEAKLIGQGDDPWGGKRAGFEAEGKIKLKDFNIKTDLGPASQEVDLIISVEGVQQK.

The signal sequence occupies residues 1 to 22 (MKKSLLGLTFASLMFSAGSAVA).

Belongs to the UPF0312 family. Type 1 subfamily.

It localises to the periplasm. In Shigella flexneri, this protein is Protein YceI.